The chain runs to 513 residues: Zinc finger CCCH-type with G patch domain-containing protein (513 aa).

Residues 155–178 form a C3H1-type zinc finger; sequence PCSYYLEGECRFDEAKCRFSHGAL. Over residues 252–261 the composition is skewed to acidic residues; that stretch reads DQDEDDELSS. Residues 252–283 form a disordered region; sequence DQDEDDELSSEESNSSMNDNSSDEAESDMDDL. Residues 262 to 271 are compositionally biased toward low complexity; sequence EESNSSMNDN. The segment covering 272 to 283 has biased composition (acidic residues); sequence SSDEAESDMDDL. Residues 312 to 358 enclose the G-patch domain; the sequence is TRGIGSKLMEKMGYIHGTGLGSDGRGIVTPVSAQILPQGRSLDACME. Residues 478–495 show a composition bias toward polar residues; the sequence is VQMQSHKQELATLQAQER. A disordered region spans residues 478–513; sequence VQMQSHKQELATLQAQERSLSKEQQTRKSKNKMFEF. Positions 496–513 are enriched in basic and acidic residues; sequence SLSKEQQTRKSKNKMFEF.

The protein localises to the nucleus. Functionally, transcription repressor. This is Zinc finger CCCH-type with G patch domain-containing protein from Drosophila melanogaster (Fruit fly).